Reading from the N-terminus, the 59-residue chain is UPF0509 protein YciZ (59 aa).

Belongs to the UPF0509 family.

The protein is UPF0509 protein YciZ of Salmonella agona (strain SL483).